The primary structure comprises 404 residues: Tryptophan synthase beta chain (404 aa).

Residue K94 is modified to N6-(pyridoxal phosphate)lysine.

The protein belongs to the TrpB family. Tetramer of two alpha and two beta chains. Requires pyridoxal 5'-phosphate as cofactor.

It carries out the reaction (1S,2R)-1-C-(indol-3-yl)glycerol 3-phosphate + L-serine = D-glyceraldehyde 3-phosphate + L-tryptophan + H2O. Its pathway is amino-acid biosynthesis; L-tryptophan biosynthesis; L-tryptophan from chorismate: step 5/5. The beta subunit is responsible for the synthesis of L-tryptophan from indole and L-serine. This chain is Tryptophan synthase beta chain, found in Staphylococcus aureus (strain MRSA252).